Reading from the N-terminus, the 188-residue chain is dCTP deaminase (188 aa).

DCTP contacts are provided by residues 111–116 (KSTYAR), 135–137 (TLE), glutamine 156, tyrosine 170, and glutamine 180. Glutamate 137 acts as the Proton donor/acceptor in catalysis.

This sequence belongs to the dCTP deaminase family. Homotrimer.

The catalysed reaction is dCTP + H2O + H(+) = dUTP + NH4(+). It participates in pyrimidine metabolism; dUMP biosynthesis; dUMP from dCTP (dUTP route): step 1/2. Catalyzes the deamination of dCTP to dUTP. This Aromatoleum aromaticum (strain DSM 19018 / LMG 30748 / EbN1) (Azoarcus sp. (strain EbN1)) protein is dCTP deaminase.